The sequence spans 298 residues: Mitochondrial basic amino acids transporter (298 aa).

6 helical membrane passes run 2–22 (ALDF…GHPF), 61–81 (GLGS…GVQG), 96–116 (FLAG…MELA), 153–172 (GMVS…FLTY), 187–207 (LLVP…WLST), and 255–275 (LLRA…VLSY). Solcar repeat units lie at residues 2 to 86 (ALDF…TLRA), 90 to 178 (DSPL…LTRA), and 185 to 275 (DRLL…VLSY).

This sequence belongs to the mitochondrial carrier (TC 2.A.29) family.

It is found in the mitochondrion inner membrane. The catalysed reaction is L-lysine(out) + L-arginine(in) = L-lysine(in) + L-arginine(out). It catalyses the reaction L-histidine(out) + L-arginine(in) = L-histidine(in) + L-arginine(out). The enzyme catalyses L-ornithine(in) + L-arginine(out) = L-ornithine(out) + L-arginine(in). It carries out the reaction L-homoarginine(in) + L-arginine(out) = L-homoarginine(out) + L-arginine(in). The catalysed reaction is N(omega)-methyl-L-arginine(in) + L-arginine(out) = N(omega)-methyl-L-arginine(out) + L-arginine(in). It catalyses the reaction L-arginine(in) = L-arginine(out). The enzyme catalyses L-lysine(in) = L-lysine(out). It carries out the reaction L-ornithine(in) = L-ornithine(out). The catalysed reaction is L-histidine(out) = L-histidine(in). In terms of biological role, mitochondrial transporter of arginine, lysine, homoarginine, methylarginine and, to a much lesser extent, ornithine and histidine. Does not transport carnitine nor acylcarnitines. Functions by both counter-exchange and uniport mechanisms. Plays a physiological role in the import of basic amino acids into mitochondria for mitochondrial protein synthesis and amino acid degradation. This is Mitochondrial basic amino acids transporter (SLC25A29) from Bos taurus (Bovine).